The sequence spans 396 residues: MSDGITDIDENQIQSTYDKVVYSFDDLKLKEELLRGIFGYGFVEPSAIQQRAILPIIEGKDVLAQAQSGTGKTGTFSIAALQNIDEKIKAPQGLILAPTRELALQIQKVVMALAIHMDVKVHACIGGTSLQEDSEALRGGAQIIVGTPGRVFDMIDRRIFKTDNIKMFILDEADEMLSTGFKEQIYNIFTMLPPTSQVVLLSATMPGDVLEVTSKFMKDPVRILVKKDELTLEGIGQYYVNVEEEQYKYDCLTDLYDSISVTQAVIFCNTRRKVEELTERLRENNFTVSAIYSDLQQQERDTIMKEFRSGSSRILISTDLLARGIDVQQVSLVINYDLPSNKENYIHRIGRGGRFGRKGIAINFVTNKDIGAMRELERFYSTQIEELPSSISELFD.

Residues 22–50 (YSFDDLKLKEELLRGIFGYGFVEPSAIQQ) carry the Q motif motif. Residues 53–223 (ILPIIEGKDV…SKFMKDPVRI (171 aa)) enclose the Helicase ATP-binding domain. 66-73 (AQSGTGKT) lines the ATP pocket. A DEAD box motif is present at residues 171–174 (DEAD). The 162-residue stretch at 234–395 (GIGQYYVNVE…ELPSSISELF (162 aa)) folds into the Helicase C-terminal domain.

The protein belongs to the DEAD box helicase family. eIF4A subfamily. Component of the eIF4F complex, which composition varies with external and internal environmental conditions. It is composed of at least eIF4A, eIF4E and eIF4G.

It is found in the cytoplasm. It carries out the reaction ATP + H2O = ADP + phosphate + H(+). Functionally, ATP-dependent RNA helicase which is a subunit of the eIF4F complex involved in cap recognition and is required for mRNA binding to ribosome. In the current model of translation initiation, eIF4A unwinds RNA secondary structures in the 5'-UTR of mRNAs which is necessary to allow efficient binding of the small ribosomal subunit, and subsequent scanning for the initiator codon. This Kluyveromyces lactis (strain ATCC 8585 / CBS 2359 / DSM 70799 / NBRC 1267 / NRRL Y-1140 / WM37) (Yeast) protein is ATP-dependent RNA helicase eIF4A (TIF1).